The chain runs to 901 residues: Probable inorganic carbon transporter subunit DabA (901 aa).

Positions 424, 426, 606, and 621 each coordinate Zn(2+).

It belongs to the inorganic carbon transporter (TC 9.A.2) DabA family. As to quaternary structure, forms a complex with DabB. Zn(2+) is required as a cofactor.

Its subcellular location is the cell membrane. In terms of biological role, part of an energy-coupled inorganic carbon pump. The polypeptide is Probable inorganic carbon transporter subunit DabA (Staphylococcus aureus (strain bovine RF122 / ET3-1)).